A 171-amino-acid polypeptide reads, in one-letter code: Ribosome maturation factor RimM (171 aa).

The PRC barrel domain occupies 96–170; that stretch reads AEGEYYYHEI…LVTIHVTEGL (75 aa).

The protein belongs to the RimM family. In terms of assembly, binds ribosomal protein uS19.

It localises to the cytoplasm. An accessory protein needed during the final step in the assembly of 30S ribosomal subunit, possibly for assembly of the head region. Essential for efficient processing of 16S rRNA. May be needed both before and after RbfA during the maturation of 16S rRNA. It has affinity for free ribosomal 30S subunits but not for 70S ribosomes. The polypeptide is Ribosome maturation factor RimM (Bacillus anthracis (strain A0248)).